The sequence spans 145 residues: MLTAEEKASVISLFAKVNVEEVGGEALGRLLVVYPWTQRFFEHFGDLSSADAILGNPKVKGHGKKVLNSFSEGLKQLDDLKGAFASLSELHCDKLHVDPENFRLLGNVLVVVLARRFGGEFTPELQANFQKVVTGVANALAHRYH.

Positions 1 to 145 constitute a Globin domain; sequence MLTAEEKASV…VANALAHRYH (145 aa). 2 residues coordinate heme b: His62 and His91.

It belongs to the globin family. In terms of assembly, heterotetramer of two alpha chains and two beta chains.

This chain is Hemoglobin fetal subunit beta, found in Ovis aries (Sheep).